A 415-amino-acid polypeptide reads, in one-letter code: 1-deoxy-D-xylulose 5-phosphate reductoisomerase (415 aa).

NADPH-binding residues include Thr-10, Gly-11, Ser-12, Ile-13, Gly-36, Arg-37, Asn-38, and Asn-128. Lys-129 provides a ligand contact to 1-deoxy-D-xylulose 5-phosphate. NADPH is bound at residue Glu-130. Asp-154 lines the Mn(2+) pocket. Positions 155, 156, 192, and 215 each coordinate 1-deoxy-D-xylulose 5-phosphate. Position 156 (Glu-156) interacts with Mn(2+). Gly-221 serves as a coordination point for NADPH. Ser-228, Asn-233, Lys-234, and Glu-237 together coordinate 1-deoxy-D-xylulose 5-phosphate. Glu-237 serves as a coordination point for Mn(2+).

Belongs to the DXR family. Mg(2+) is required as a cofactor. The cofactor is Mn(2+).

It carries out the reaction 2-C-methyl-D-erythritol 4-phosphate + NADP(+) = 1-deoxy-D-xylulose 5-phosphate + NADPH + H(+). It functions in the pathway isoprenoid biosynthesis; isopentenyl diphosphate biosynthesis via DXP pathway; isopentenyl diphosphate from 1-deoxy-D-xylulose 5-phosphate: step 1/6. Functionally, catalyzes the NADPH-dependent rearrangement and reduction of 1-deoxy-D-xylulose-5-phosphate (DXP) to 2-C-methyl-D-erythritol 4-phosphate (MEP). This Synechococcus sp. (strain CC9605) protein is 1-deoxy-D-xylulose 5-phosphate reductoisomerase.